A 312-amino-acid polypeptide reads, in one-letter code: Aspartate carbamoyltransferase catalytic subunit (312 aa).

2 residues coordinate carbamoyl phosphate: Arg57 and Thr58. An L-aspartate-binding site is contributed by Lys85. Residues Arg107, His135, and Gln138 each contribute to the carbamoyl phosphate site. The L-aspartate site is built by Arg168 and Arg222. The carbamoyl phosphate site is built by Gly264 and Pro265.

The protein belongs to the aspartate/ornithine carbamoyltransferase superfamily. ATCase family. In terms of assembly, heterododecamer (2C3:3R2) of six catalytic PyrB chains organized as two trimers (C3), and six regulatory PyrI chains organized as three dimers (R2).

It carries out the reaction carbamoyl phosphate + L-aspartate = N-carbamoyl-L-aspartate + phosphate + H(+). It functions in the pathway pyrimidine metabolism; UMP biosynthesis via de novo pathway; (S)-dihydroorotate from bicarbonate: step 2/3. In terms of biological role, catalyzes the condensation of carbamoyl phosphate and aspartate to form carbamoyl aspartate and inorganic phosphate, the committed step in the de novo pyrimidine nucleotide biosynthesis pathway. This Carboxydothermus hydrogenoformans (strain ATCC BAA-161 / DSM 6008 / Z-2901) protein is Aspartate carbamoyltransferase catalytic subunit.